The following is an 81-amino-acid chain: Sulfur carrier protein TusA (81 aa).

The active-site Cysteine persulfide intermediate is the C19.

This sequence belongs to the sulfur carrier protein TusA family.

It is found in the cytoplasm. In terms of biological role, sulfur carrier protein which probably makes part of a sulfur-relay system. This is Sulfur carrier protein TusA from Shewanella denitrificans (strain OS217 / ATCC BAA-1090 / DSM 15013).